The primary structure comprises 158 residues: Snaclec jerdonuxin subunit alpha (158 aa).

The first 23 residues, 1 to 23 (MGRFTFVSFGLLVVFLSLSGTGA), serve as a signal peptide directing secretion. 3 disulfides stabilise this stretch: cysteine 27–cysteine 38, cysteine 55–cysteine 152, and cysteine 127–cysteine 144. In terms of domain architecture, C-type lectin spans 34–153 (YDRYCYQAFS…CGTENPFVCK (120 aa)).

This sequence belongs to the snaclec family. In terms of assembly, tetramer of 4 heterodimers of alpha and beta subunits; disulfide-linked. Expressed by the venom gland.

It localises to the secreted. Snaclec that strongly induces platelet aggregation, in a dose-dependent manner. The protein is Snaclec jerdonuxin subunit alpha of Protobothrops jerdonii (Jerdon's pitviper).